A 204-amino-acid chain; its full sequence is FMN-dependent NADH:quinone oxidoreductase (204 aa).

FMN contacts are provided by residues Ser10, 15-17 (SLS), and 139-142 (TSGG).

This sequence belongs to the azoreductase type 1 family. As to quaternary structure, homodimer. FMN serves as cofactor.

It catalyses the reaction 2 a quinone + NADH + H(+) = 2 a 1,4-benzosemiquinone + NAD(+). It carries out the reaction N,N-dimethyl-1,4-phenylenediamine + anthranilate + 2 NAD(+) = 2-(4-dimethylaminophenyl)diazenylbenzoate + 2 NADH + 2 H(+). Its function is as follows. Quinone reductase that provides resistance to thiol-specific stress caused by electrophilic quinones. Functionally, also exhibits azoreductase activity. Catalyzes the reductive cleavage of the azo bond in aromatic azo compounds to the corresponding amines. This Rhizobium leguminosarum bv. trifolii (strain WSM2304) protein is FMN-dependent NADH:quinone oxidoreductase.